A 67-amino-acid chain; its full sequence is Vespin (67 aa).

Positions methionine 1–leucine 21 are cleaved as a signal peptide.

In terms of tissue distribution, expressed by the venom gland.

It localises to the secreted. In terms of biological role, shows contractile activity on isolated ileum smooth muscle. This is Vespin from Vespa magnifica (Hornet).